The chain runs to 284 residues: Acetyl-coenzyme A carboxylase carboxyl transferase subunit beta (284 aa).

A CoA carboxyltransferase N-terminal domain is found at F31–K284. Residues C35, C38, C54, and C57 each coordinate Zn(2+). The segment at C35–C57 adopts a C4-type zinc-finger fold.

Belongs to the AccD/PCCB family. Acetyl-CoA carboxylase is a heterohexamer composed of biotin carboxyl carrier protein (AccB), biotin carboxylase (AccC) and two subunits each of ACCase subunit alpha (AccA) and ACCase subunit beta (AccD). The cofactor is Zn(2+).

The protein resides in the cytoplasm. It catalyses the reaction N(6)-carboxybiotinyl-L-lysyl-[protein] + acetyl-CoA = N(6)-biotinyl-L-lysyl-[protein] + malonyl-CoA. It functions in the pathway lipid metabolism; malonyl-CoA biosynthesis; malonyl-CoA from acetyl-CoA: step 1/1. Component of the acetyl coenzyme A carboxylase (ACC) complex. Biotin carboxylase (BC) catalyzes the carboxylation of biotin on its carrier protein (BCCP) and then the CO(2) group is transferred by the transcarboxylase to acetyl-CoA to form malonyl-CoA. The protein is Acetyl-coenzyme A carboxylase carboxyl transferase subunit beta of Clostridioides difficile (strain 630) (Peptoclostridium difficile).